The sequence spans 41 residues: Iota-conotoxin-like r11d (41 aa).

Disulfide bonds link Cys-2/Cys-16, Cys-9/Cys-19, Cys-15/Cys-24, and Cys-18/Cys-35. 4-hydroxyproline is present on Pro-8. Pro-26 is subject to 4-hydroxyproline.

In terms of processing, position 41 corresponds to a L-threonine, and not a D-threonine as firstly supposed. Expressed by the venom duct.

It is found in the secreted. Functionally, iota-conotoxins bind to voltage-gated sodium channels (Nav) and act as agonists by shifting the voltage-dependence of activation to more hyperpolarized levels. Both natural (L-Thr form) and synthetic (D-Thr form) peptides cause paralysis and death following intracranial injection and grooming and hypersensitivity upon intraperitoneal injection into mice. The L-Thr form of the peptide is 7-fold more potent than the D-Thr form. Both natural peptide (L-Thr form) and synthetic peptide (D-Thr form) are active on nerve, and on muscle. The protein is Iota-conotoxin-like r11d of Conus radiatus (Rayed cone).